The chain runs to 61 residues: MAEQKKIRVTLVKSLIGTIESHRACARGLGLRRREHTVEVLDTPENRGMINKISYLLKVES.

Belongs to the universal ribosomal protein uL30 family. In terms of assembly, part of the 50S ribosomal subunit.

The polypeptide is Large ribosomal subunit protein uL30 (Neisseria meningitidis serogroup C (strain 053442)).